We begin with the raw amino-acid sequence, 227 residues long: CDP-diacylglycerol--glycerol-3-phosphate 3-phosphatidyltransferase (227 aa).

5 consecutive transmembrane segments (helical) span residues 30-50 (IFIA…GSVA), 58-78 (VTIH…TAVI), 112-132 (VLIA…VIVL), 159-179 (WKTT…SFSL), and 192-212 (WAIV…SFGI).

Belongs to the CDP-alcohol phosphatidyltransferase class-I family.

It localises to the cell membrane. The enzyme catalyses a CDP-1,2-diacyl-sn-glycerol + sn-glycerol 3-phosphate = a 1,2-diacyl-sn-glycero-3-phospho-(1'-sn-glycero-3'-phosphate) + CMP + H(+). Its pathway is phospholipid metabolism; phosphatidylglycerol biosynthesis; phosphatidylglycerol from CDP-diacylglycerol: step 1/2. Functionally, this protein catalyzes the committed step to the synthesis of the acidic phospholipids. The sequence is that of CDP-diacylglycerol--glycerol-3-phosphate 3-phosphatidyltransferase (pgsA) from Mycoplasma pneumoniae (strain ATCC 29342 / M129 / Subtype 1) (Mycoplasmoides pneumoniae).